Consider the following 300-residue polypeptide: 4-hydroxy-tetrahydrodipicolinate synthase (300 aa).

T57 contacts pyruvate. Y145 (proton donor/acceptor) is an active-site residue. K173 (schiff-base intermediate with substrate) is an active-site residue. Pyruvate is bound at residue I213.

Belongs to the DapA family. Homotetramer; dimer of dimers.

The protein resides in the cytoplasm. It carries out the reaction L-aspartate 4-semialdehyde + pyruvate = (2S,4S)-4-hydroxy-2,3,4,5-tetrahydrodipicolinate + H2O + H(+). Its pathway is amino-acid biosynthesis; L-lysine biosynthesis via DAP pathway; (S)-tetrahydrodipicolinate from L-aspartate: step 3/4. In terms of biological role, catalyzes the condensation of (S)-aspartate-beta-semialdehyde [(S)-ASA] and pyruvate to 4-hydroxy-tetrahydrodipicolinate (HTPA). In Corynebacterium urealyticum (strain ATCC 43042 / DSM 7109), this protein is 4-hydroxy-tetrahydrodipicolinate synthase.